Reading from the N-terminus, the 417-residue chain is Serine hydroxymethyltransferase (417 aa).

Residues L122 and 126–128 (GHL) contribute to the (6S)-5,6,7,8-tetrahydrofolate site. At K230 the chain carries N6-(pyridoxal phosphate)lysine. 355-357 (SPF) contributes to the (6S)-5,6,7,8-tetrahydrofolate binding site.

Belongs to the SHMT family. In terms of assembly, homodimer. Pyridoxal 5'-phosphate serves as cofactor.

The protein resides in the cytoplasm. The catalysed reaction is (6R)-5,10-methylene-5,6,7,8-tetrahydrofolate + glycine + H2O = (6S)-5,6,7,8-tetrahydrofolate + L-serine. It participates in one-carbon metabolism; tetrahydrofolate interconversion. It functions in the pathway amino-acid biosynthesis; glycine biosynthesis; glycine from L-serine: step 1/1. Its function is as follows. Catalyzes the reversible interconversion of serine and glycine with tetrahydrofolate (THF) serving as the one-carbon carrier. This reaction serves as the major source of one-carbon groups required for the biosynthesis of purines, thymidylate, methionine, and other important biomolecules. Also exhibits THF-independent aldolase activity toward beta-hydroxyamino acids, producing glycine and aldehydes, via a retro-aldol mechanism. This chain is Serine hydroxymethyltransferase, found in Francisella tularensis subsp. tularensis (strain FSC 198).